Here is a 340-residue protein sequence, read N- to C-terminus: MKKQKIAVLGPGSWGTALAQVLNDNGHEVRIWGNIPEQIDEINEKHTNTRYFKDVILDENIKAYKELSEALDSVNAILFVVPTKVTRLVAKQVAELLDHKVVVMHASKGLEPGTHERLSTILEEEIPSEMRSEIVVVSGPSHAEETIVRDITLITAASKDLETARYVQGIFSNSYFRLYTNSDVIGVETAGALKNIIAVGAGALHGMGYGDNAKAAVITRGLAEITRLGVKLGADPLTYSGLSGVGDLIVTGTSIHSRNWRAGDALGRGEKLEDIERNMGMVIEGISTTKVAYEIAQELGVYMPITTAIYKSIYEGADIKESILNMMSNELRSENEWDKK.

Residues serine 13, tryptophan 14, and lysine 108 each coordinate NADPH. Residues lysine 108, glycine 139, and serine 141 each contribute to the sn-glycerol 3-phosphate site. Alanine 143 lines the NADPH pocket. The sn-glycerol 3-phosphate site is built by lysine 194, aspartate 247, serine 257, arginine 258, and asparagine 259. The active-site Proton acceptor is lysine 194. An NADPH-binding site is contributed by arginine 258. Residues valine 282 and glutamate 284 each coordinate NADPH.

It belongs to the NAD-dependent glycerol-3-phosphate dehydrogenase family.

It localises to the cytoplasm. The catalysed reaction is sn-glycerol 3-phosphate + NAD(+) = dihydroxyacetone phosphate + NADH + H(+). The enzyme catalyses sn-glycerol 3-phosphate + NADP(+) = dihydroxyacetone phosphate + NADPH + H(+). Its pathway is membrane lipid metabolism; glycerophospholipid metabolism. Its function is as follows. Catalyzes the reduction of the glycolytic intermediate dihydroxyacetone phosphate (DHAP) to sn-glycerol 3-phosphate (G3P), the key precursor for phospholipid synthesis. The polypeptide is Glycerol-3-phosphate dehydrogenase [NAD(P)+] (Streptococcus thermophilus (strain CNRZ 1066)).